The primary structure comprises 418 residues: Actin-related protein 3 (418 aa).

Alanine 2 is subject to N-acetylalanine.

This sequence belongs to the actin family. ARP3 subfamily. In terms of assembly, component of the Arp2/3 complex composed of ACTR2/ARP2, ACTR3/ARP3, ARPC1B/p41-ARC, ARPC2/p34-ARC, ARPC3/p21-ARC, ARPC4/p20-ARC and ARPC5/p16-ARC. As to expression, detected in fibroblasts.

It localises to the cytoplasm. The protein resides in the cytoskeleton. The protein localises to the cell projection. Its subcellular location is the nucleus. ATP-binding component of the Arp2/3 complex, a multiprotein complex that mediates actin polymerization upon stimulation by nucleation-promoting factor (NPF). The Arp2/3 complex mediates the formation of branched actin networks in the cytoplasm, providing the force for cell motility. Seems to contact the pointed end of the daughter actin filament. In addition to its role in the cytoplasmic cytoskeleton, the Arp2/3 complex also promotes actin polymerization in the nucleus, thereby regulating gene transcription and repair of damaged DNA. The Arp2/3 complex promotes homologous recombination (HR) repair in response to DNA damage by promoting nuclear actin polymerization, leading to drive motility of double-strand breaks (DSBs). The chain is Actin-related protein 3 (ACTR3) from Gallus gallus (Chicken).